Here is a 441-residue protein sequence, read N- to C-terminus: Protein SPMIP7 (441 aa).

In terms of tissue distribution, testis specific. Expressed at the spermatid stage.

Functionally, essential for normal spermatogenesis. This chain is Protein SPMIP7 (Spmip7), found in Mus musculus (Mouse).